Here is a 146-residue protein sequence, read N- to C-terminus: Endoribonuclease YbeY (146 aa).

The Zn(2+) site is built by H108, H112, and H118.

The protein belongs to the endoribonuclease YbeY family. It depends on Zn(2+) as a cofactor.

The protein resides in the cytoplasm. Its function is as follows. Single strand-specific metallo-endoribonuclease involved in late-stage 70S ribosome quality control and in maturation of the 3' terminus of the 16S rRNA. This Aster yellows witches'-broom phytoplasma (strain AYWB) protein is Endoribonuclease YbeY.